The primary structure comprises 296 residues: MTAQVLDGKATAGQIKEELAQRVARLRERDVVPGLGTVLVGDDPGSRSYVAGKHRDCEQVGLASIRRELPADASQEELERVIDELNEDPRCTGYIVQLPLPEYMDTNSVLERIDPAKDADGLHPTNLGRLVLNVSEPMTSPLPCTPHGIVELLTRHGVELAGREVLVIGRGVTVGRPMGLLLTRREINATVTLAHTGTRNLPELLGRADVVVAAAGRPHMVTAEQVKPGAVLLDVGVSRVPDPETGKGRLTGDIDPAAAEVASWMSPNPGGVGPMTRAMLLVNVVESCERQVFGQP.

NADP(+) is bound by residues 169–171, Thr196, and Val237; that span reads GRG.

The protein belongs to the tetrahydrofolate dehydrogenase/cyclohydrolase family. Homodimer.

The catalysed reaction is (6R)-5,10-methylene-5,6,7,8-tetrahydrofolate + NADP(+) = (6R)-5,10-methenyltetrahydrofolate + NADPH. It catalyses the reaction (6R)-5,10-methenyltetrahydrofolate + H2O = (6R)-10-formyltetrahydrofolate + H(+). It participates in one-carbon metabolism; tetrahydrofolate interconversion. Its function is as follows. Catalyzes the oxidation of 5,10-methylenetetrahydrofolate to 5,10-methenyltetrahydrofolate and then the hydrolysis of 5,10-methenyltetrahydrofolate to 10-formyltetrahydrofolate. This Kocuria rhizophila (strain ATCC 9341 / DSM 348 / NBRC 103217 / DC2201) protein is Bifunctional protein FolD.